The following is a 563-amino-acid chain: MSSNLLPTLNSGGKVKDGSTKEDRPYKIFFRDLFLVKENEMAAKETEKFMNRNMKVYQKTTFSSRMKSHSYLSQLAFYPKRSGRSFEKFGPGPAPIPRLIEGSDTKRTVHEFINDQRDRFLLEYALSTKRNTIKKFEKDIAMRERQLKKAEKKLQDDALAFEEFLRENDQRSVDALKMAAQETINKLQMTAELKKASMEVQAVKSEIAKTEFLLREYMKYGFFLLQMSPKHWQIQQALKRAQASKSKANIILPKILAKLSLHSSNKEGILEESGRTAVLSEDASQGRDSQGKPSRSLTRTPEKKKSNLAESFGSEDSLEFLLDDEMDVDLEPALYFKEPEELLQVLRELEEQNLTLFQYSQDVDENLEEVNKREKVIQDKTNSNIEFLLEQEKMLKANCVREEEKAAELQLKSKLFSFGEFNSDAQEILIDSLSKKITQVYKVCIGDAEDDGLNPIQKLVKVESRLVELCDLIESIPKENVEAIERMKQKEWRQKFRDEKMKEKQRHQQERLKAALEKAVAQPKKKLGRRLVFHSKPPSGNKQQLPLVNETKTKSQEEEYFFT.

Positions 1–11 (MSSNLLPTLNS) are enriched in polar residues. The segment at 1–21 (MSSNLLPTLNSGGKVKDGSTK) is disordered. A coiled-coil region spans residues 129 to 212 (KRNTIKKFEK…VKSEIAKTEF (84 aa)). Residues 272-311 (ESGRTAVLSEDASQGRDSQGKPSRSLTRTPEKKKSNLAES) form a disordered region. Residues 282–299 (DASQGRDSQGKPSRSLTR) show a composition bias toward polar residues. Coiled-coil stretches lie at residues 384–415 (NIEF…KSKL) and 497–522 (RDEK…AVAQ). The tract at residues 522–563 (QPKKKLGRRLVFHSKPPSGNKQQLPLVNETKTKSQEEEYFFT) is disordered. The span at 523-533 (PKKKLGRRLVF) shows a compositional bias: basic residues.

As to quaternary structure, interacts with CCDC42, CFAP53, IFT88 and ODF2. Interacts with CCDC146. Interacts with TEKT3. Interacts with ubiquitinated histone H2A.

It localises to the cytoplasm. The protein resides in the cytoskeleton. It is found in the microtubule organizing center. The protein localises to the centrosome. Its subcellular location is the perinuclear region. It localises to the cell projection. The protein resides in the cilium. It is found in the flagellum. In terms of biological role, essential for male fertility. Required for sperm flagellum biogenesis. Also required for acrosome biogenesis. Required for the attachment of developing acrosomes to the nucleus during spermiogenesis and may be involved in the transport of fibrous sheath components. This chain is Coiled-coil domain-containing protein 38 (CCDC38), found in Homo sapiens (Human).